A 562-amino-acid chain; its full sequence is MFKNPNIRYHKLSSKSNDNDQESSHRCKHILLFIITLFLLIVGLYIANSLAYARFASTSTGPIAAPDVTKCGQPDLPPGTAPINCCPPIPAKIIDFELPPPSTTMRVRRAAHLVDDAYIAKFKKAVELMRALPEDDPRSFKQQANVHCAYCAGAYNQAGFTNLKLQIHRSWLFFPFHRYYIYFFERILGKLINDTTFALPFWNYDSPGGMTIPSMFIDTNSSLYDSLRDSNHQPPTIVDLNYAFSDSDNTTTPEEQMIINLKIVYRQMVSSAKTPQLFFGRPYRRGDQEFPGVGSIELVPHGMIHLWTGSENTPYGENMGAFYSTARDPIFFAHHSNVDRMWSIWKTLGGPRRTDLTDPDFLDASFVFYDENAEMVRVKVRDCLDEKKLGYVYQDVEIPWLNTRPTPKVSPSLLKKFHRTNTANPRQVFPAILDRVLKVIVTRPKKTRSRKEKDELEEILVIEGIELERDHGHVKFDVYINADEDDLAVISPENAEFAGSFVSLWHKPIKGKRTKTQLLTLSICDILEDLDADEDDYVLVTLVPRNAGDAIKIHNVKIELDG.

2 disulfides stabilise this stretch: Cys-71-Cys-86 and Cys-85-Cys-148. Cu cation is bound by residues His-147, His-168, His-177, His-301, His-305, and His-335. Positions 151 to 168 (CAGAYNQAGFTNLKLQIH) form a cross-link, 2'-(S-cysteinyl)-histidine (Cys-His).

Belongs to the tyrosinase family. In terms of assembly, monomer. Requires Cu(2+) as cofactor. Post-translationally, glycosylated. In terms of processing, contains probably N- and C-terminal propeptides. Expressed in petals. Not detected in stems and leaves.

The protein localises to the vacuole lumen. The enzyme catalyses 2',4,4',6'-tetrahydroxychalcone 4'-O-beta-D-glucoside + O2 = aureusidin 6-O-beta-glucoside + H2O. It carries out the reaction 2 2',3,4,4',6'-pentahydroxychalcone 4'-O-beta-D-glucoside + O2 + 2 H(+) = 2 aureusidin 6-O-beta-glucoside + 2 H2O. It catalyses the reaction 2',3,4,4',6'-pentahydroxychalcone 4'-O-beta-D-glucoside + O2 + H(+) = bracteatin 6-O-beta-glucoside + H2O. Its activity is regulated as follows. H(2)O(2) activates the 3-hydroxylation and oxidative cyclization of tetrahydroxychalcone but inhibits reaction with pentahydroxychalcone. Inhibited by phenylthiourea. Involved in the biosynthesis of aurones, plant flavonoids that provide yellow coloration to flowers. Can use tetrahydroxychalcone (THC), pentahydroxychalcone (PHC), THC 4'-glucoside and PHC 4'-glucoside as substrates, but not 2'-hydroxychalcone, 4-hydroxychalcone, PHC 3-glucoside, 2',6'-dihydroxy-4,4'-dimethoxychalcone, naringenin, eriodictyol and 4,4',6-trihydroxyaurone. Can also produce bracteatin from PHC. The polypeptide is Aureusidin synthase (AS1) (Antirrhinum majus (Garden snapdragon)).